We begin with the raw amino-acid sequence, 516 residues long: UvrABC system protein C (516 aa).

The GIY-YIG domain occupies 9–87 (HLPGCYLFKD…IKKHWPRYNI (79 aa)). The 36-residue stretch at 191-226 (GELIESMEKEMKKMAAKQMFEQAMALRDEISALEYL) folds into the UVR domain.

It belongs to the UvrC family. Interacts with UvrB in an incision complex.

Its subcellular location is the cytoplasm. The UvrABC repair system catalyzes the recognition and processing of DNA lesions. UvrC both incises the 5' and 3' sides of the lesion. The N-terminal half is responsible for the 3' incision and the C-terminal half is responsible for the 5' incision. This is UvrABC system protein C from Methanosarcina acetivorans (strain ATCC 35395 / DSM 2834 / JCM 12185 / C2A).